The primary structure comprises 224 residues: Uracil-DNA glycosylase (224 aa).

Asp65 serves as the catalytic Proton acceptor.

It belongs to the uracil-DNA glycosylase (UDG) superfamily. UNG family.

It localises to the cytoplasm. The catalysed reaction is Hydrolyzes single-stranded DNA or mismatched double-stranded DNA and polynucleotides, releasing free uracil.. Functionally, excises uracil residues from the DNA which can arise as a result of misincorporation of dUMP residues by DNA polymerase or due to deamination of cytosine. This chain is Uracil-DNA glycosylase, found in Buchnera aphidicola subsp. Baizongia pistaciae (strain Bp).